A 158-amino-acid chain; its full sequence is Oocyte-secreted protein 2 (158 aa).

A signal peptide spans 1–17 (MALEVLMLLAVLIWTGA).

This sequence belongs to the PLAC1 family. As to expression, highly expressed in oocytes.

It localises to the secreted. The protein resides in the cytoplasm. Functionally, involved in oocyte maturation. The protein is Oocyte-secreted protein 2 (OOSP2) of Homo sapiens (Human).